Reading from the N-terminus, the 927-residue chain is Isoleucine--tRNA ligase (927 aa).

A 'HIGH' region motif is present at residues 57-67 (PFANGNIHMGH). Glu-553 contacts L-isoleucyl-5'-AMP. Positions 594 to 598 (KMSKS) match the 'KMSKS' region motif. Position 597 (Lys-597) interacts with ATP. Positions 886, 889, 906, and 909 each coordinate Zn(2+).

This sequence belongs to the class-I aminoacyl-tRNA synthetase family. IleS type 1 subfamily. Monomer. The cofactor is Zn(2+).

The protein resides in the cytoplasm. The enzyme catalyses tRNA(Ile) + L-isoleucine + ATP = L-isoleucyl-tRNA(Ile) + AMP + diphosphate. Its function is as follows. Catalyzes the attachment of isoleucine to tRNA(Ile). As IleRS can inadvertently accommodate and process structurally similar amino acids such as valine, to avoid such errors it has two additional distinct tRNA(Ile)-dependent editing activities. One activity is designated as 'pretransfer' editing and involves the hydrolysis of activated Val-AMP. The other activity is designated 'posttransfer' editing and involves deacylation of mischarged Val-tRNA(Ile). This chain is Isoleucine--tRNA ligase, found in Lactobacillus acidophilus (strain ATCC 700396 / NCK56 / N2 / NCFM).